Consider the following 98-residue polypeptide: N(2)-fixation sustaining protein CowN (98 aa).

It belongs to the CowN family.

Is required to sustain N(2)-dependent growth in the presence of low levels of carbon monoxide (CO). Probably acts by protecting the N(2) fixation ability of the nitrogenase complex, which is inactivated in the presence of CO. The polypeptide is N(2)-fixation sustaining protein CowN (Paramagnetospirillum magneticum (strain ATCC 700264 / AMB-1) (Magnetospirillum magneticum)).